The chain runs to 267 residues: Interleukin-1 beta (267 aa).

The propeptide occupies 1–115; it reads MAPVPELTSE…DTWDDGFVCD (115 aa).

It belongs to the IL-1 family. In terms of assembly, monomer. In its precursor form, weakly interacts with full-length MEFV; the mature cytokine does not interact at all. Interacts with integrins ITGAV:ITGBV and ITGA5:ITGB1; integrin-binding is required for IL1B signaling. Interacts with cargo receptor TMED10; the interaction is direct and is required for the secretion of IL1B mature form. Interacts with HSP90AB1; the interaction facilitates cargo translocation into the ERGIC. Interacts with HSP90B1; the interaction facilitates cargo translocation into the ERGIC.

Its subcellular location is the cytoplasm. It localises to the cytosol. The protein localises to the secreted. It is found in the lysosome. The protein resides in the extracellular exosome. In terms of biological role, potent pro-inflammatory cytokine. Initially discovered as the major endogenous pyrogen, induces prostaglandin synthesis, neutrophil influx and activation, T-cell activation and cytokine production, B-cell activation and antibody production, and fibroblast proliferation and collagen production. Promotes Th17 differentiation of T-cells. Synergizes with IL12/interleukin-12 to induce IFNG synthesis from T-helper 1 (Th1) cells. Plays a role in angiogenesis by inducing VEGF production synergistically with TNF and IL6. Involved in transduction of inflammation downstream of pyroptosis: its mature form is specifically released in the extracellular milieu by passing through the gasdermin-D (GSDMD) pore. The protein is Interleukin-1 beta (IL1B) of Felis catus (Cat).